Consider the following 400-residue polypeptide: MIIKPKTRGFICTTTHPVGCEANVLEQINTTKAKGPITNGPKKVLVIGSSSGYGLSSRIAAAFGSGAATLGVFFEKPGTEKKPGTAGWYNSAAFDKFAKADGLYSKSINGDAFSHEAKQKAIDLIKADLGQIDMVVYSLASPVRKLPDSGELIRSSLKPIGETYTATAVDTNKDLIIETSVEPASEQEIQDTVTVMGGEDWELWLAALSDAGVLADGCKTVAYSYIGTELTWPIYWHGALGKAKMDLDRAAKALDEKLSTTGGSANVAVLKSVVTQASSAIPVMPLYIAMVFKKMREEGLHEGCMEQINRMFAERLYREDGQAPQVDDANRLRLDDWELREEIQQHCRDLWPSVTTENLSELTDYREYKDEFLKLFGFGVEGVDYDADVNPEVNFDVEQF.

NAD(+) is bound by residues 48-53, 74-75, 111-112, and 139-140; these read GSSSGY, FE, DA, and LA. Y225 contributes to the substrate binding site. Y235 serves as the catalytic Proton donor. NAD(+) contacts are provided by residues K244 and 273 to 275; that span reads VVT.

Belongs to the TER reductase family. In terms of assembly, monomer.

The catalysed reaction is a 2,3-saturated acyl-[ACP] + NAD(+) = a (2E)-enoyl-[ACP] + NADH + H(+). It participates in lipid metabolism; fatty acid biosynthesis. In terms of biological role, involved in the final reduction of the elongation cycle of fatty acid synthesis (FAS II). Catalyzes the reduction of a carbon-carbon double bond in an enoyl moiety that is covalently linked to an acyl carrier protein (ACP). The polypeptide is Enoyl-[acyl-carrier-protein] reductase [NADH] (Shewanella woodyi (strain ATCC 51908 / MS32)).